The chain runs to 143 residues: uncharacterized protein (143 aa).

Residues 65 to 85 traverse the membrane as a helical segment; it reads LVWMLVGTIVLSLDIIFPALV.

The protein resides in the membrane. This is an uncharacterized protein from Saccharomyces cerevisiae (strain ATCC 204508 / S288c) (Baker's yeast).